Consider the following 340-residue polypeptide: 4-hydroxy-2-oxovalerate aldolase (340 aa).

One can recognise a Pyruvate carboxyltransferase domain in the interval 8 to 260; it reads VILHDMSLRD…SHGINLYDIM (253 aa). Residue 16–17 participates in substrate binding; it reads RD. Mn(2+) is bound at residue Asp-17. His-20 acts as the Proton acceptor in catalysis. 2 residues coordinate substrate: Ser-170 and His-199. Mn(2+)-binding residues include His-199 and His-201. Tyr-290 contacts substrate.

Belongs to the 4-hydroxy-2-oxovalerate aldolase family.

The enzyme catalyses (S)-4-hydroxy-2-oxopentanoate = acetaldehyde + pyruvate. The polypeptide is 4-hydroxy-2-oxovalerate aldolase (Shewanella pealeana (strain ATCC 700345 / ANG-SQ1)).